We begin with the raw amino-acid sequence, 1378 residues long: Carboxypeptidase D (1378 aa).

An N-terminal signal peptide occupies residues 1 to 37; sequence MASGWDERPPWRLESLRLLPPPPLLLLLLLLRSSAQA. Over 38 to 1297 the chain is Extracellular; it reads AHIKKAEATT…DNRIFGLPRE (1260 aa). In terms of domain architecture, Peptidase M14 1 spans 62–380; it reads HYYHEAALGE…ESLITLIEKV (319 aa). Residues H139 and E142 each contribute to the Zn(2+) site. The Cell attachment site motif lies at 162–164; sequence RGD. N-linked (GlcNAc...) asparagine glycans are attached at residues N172 and N217. A disordered region spans residues 189 to 232; it reads RAREGDCGLGDSGPPGTSGRDNSRGRDLNRSFPDQFSTGEPPSL. H257 is a binding site for Zn(2+). Y265 carries the phosphotyrosine modification. S270 is modified (phosphoserine). E350 functions as the Proton donor/acceptor in the catalytic mechanism. N-linked (GlcNAc...) asparagine glycans are attached at residues N399, N410, N429, and N522. One can recognise a Peptidase M14 2 domain in the interval 502–792; it reads HHHHFPDMEI…RSLIQFMKQV (291 aa). The Zn(2+) site is built by H564 and E567. N626 carries an N-linked (GlcNAc...) asparagine glycan. H671 serves as a coordination point for Zn(2+). The active-site Proton donor/acceptor is the E762. N-linked (GlcNAc...) asparagine glycosylation is found at N811, N855, N867, N879, N953, and N976. The disordered stretch occupies residues 875–898; sequence TDANNESKKGKGHSTSTDDTSDPT. Positions 930 to 1209 constitute a Peptidase M14 3 domain; that stretch reads RYHSYKDLSE…KSLLSMLVEV (280 aa). Residues 1039–1048 are compositionally biased toward basic and acidic residues; sequence RERAQEKDCT. A disordered region spans residues 1039–1068; it reads RERAQEKDCTSKTGHTNARGRDLDTDFTSN. N-linked (GlcNAc...) asparagine glycans are attached at residues N1068 and N1140. The chain crosses the membrane as a helical span at residues 1298-1318; the sequence is LVVTVSGATMSALILTACIIW. 3 S-palmitoyl cysteine lipidation sites follow: C1315, C1319, and C1321. Residues 1319–1378 are Cytoplasmic-facing; the sequence is CICSIKSNRHKDGFHRLRQHHDEYEDEIRMMSTGSKKSLLSHEFQDETDTEEETLYSSKH. Phosphoserine is present on residues S1356 and S1359. The segment at 1357–1378 is disordered; sequence LLSHEFQDETDTEEETLYSSKH. T1366 and T1368 each carry phosphothreonine.

The protein belongs to the peptidase M14 family. Zn(2+) serves as cofactor. In terms of tissue distribution, isoform 1 is widely expressed with highest levels in the hippocampus, spinal cord, atrium, colon, testis and ovaries. Detected in the liver of females but not males. Isoform 2 is not detected in brain or lung.

Its subcellular location is the cell membrane. It localises to the nucleus. It carries out the reaction Releases C-terminal Arg and Lys from polypeptides.. This Rattus norvegicus (Rat) protein is Carboxypeptidase D.